The sequence spans 101 residues: Cilia- and flagella-associated protein 141 (101 aa).

In terms of assembly, microtubule inner protein component of sperm flagellar doublet microtubules. Expressed in airway epithelial cells.

It is found in the cytoplasm. It localises to the cytoskeleton. The protein resides in the cilium axoneme. Its subcellular location is the flagellum axoneme. Microtubule inner protein (MIP) part of the dynein-decorated doublet microtubules (DMTs) in cilia axoneme, which is required for motile cilia beating. This Homo sapiens (Human) protein is Cilia- and flagella-associated protein 141.